The chain runs to 529 residues: E3 ubiquitin-protein ligase arih1 (529 aa).

Disordered stretches follow at residues 1-29 (MDSD…HEDE) and 46-69 (ERAG…EEDE). Over residues 51-64 (CGEGGGSALGPGPG) the composition is skewed to gly residues. Residues 77–125 (TAEQILQHMVECIREVNEVIQNPATITRILLSHFNWDKEKLMERYFDGN) form a UBA-like region. The TRIAD supradomain stretch occupies residues 154–365 (LDMPCQICYL…SAWYNCNRYN (212 aa)). The Zn(2+) site is built by C158, C161, C175, H177, C180, C183, C203, C208, C248, C253, C269, C271, C276, C279, H284, C289, C316, and C319. The RING-type 1 zinc-finger motif lies at 158–208 (CQICYLNYPNSYFTGLECGHKFCMQCWGEYLTTKIIEEGMGQTISCPAHGC). The IBR-type zinc-finger motif lies at 228 to 289 (LKYQHLITNS…GENWHDPVKC (62 aa)). The segment at 316–347 (CPKCHVTIEKDGGCNHMVCRNQNCKAEFCWVC) adopts an RING-type 2; atypical zinc-finger fold. C329 is a catalytic residue. Zn(2+) is bound by residues C334, C339, C344, C347, H354, and C361. Residues 380–529 (RAALQRYLFY…EKDLWEYIED (150 aa)) are ariadne domain.

Belongs to the RBR family. Ariadne subfamily. In terms of assembly, interacts (via the first RING-type zinc finger) with ube2l3. Associates with cullin-RING ubiquitin ligase (CRL) complexes containing neddylated cullin.

It localises to the cytoplasm. The protein localises to the nucleus. It carries out the reaction [E2 ubiquitin-conjugating enzyme]-S-ubiquitinyl-L-cysteine + [acceptor protein]-L-lysine = [E2 ubiquitin-conjugating enzyme]-L-cysteine + [acceptor protein]-N(6)-ubiquitinyl-L-lysine.. It functions in the pathway protein modification; protein ubiquitination. Its activity is regulated as follows. Autoinhibited by the ariadne domain, which masks the second RING-type zinc finger that contains the active site and inhibits the E3 activity. Inhibition is relieved upon binding to neddylated cullin-RING ubiquitin ligase complexes, which activate the E3 ligase activity of ARIH1. Its function is as follows. E3 ubiquitin-protein ligase, which catalyzes ubiquitination of target proteins together with ubiquitin-conjugating enzyme E2 ube2l3. Acts as an atypical E3 ubiquitin-protein ligase by working together with cullin-RING ubiquitin ligase (CRL) complexes and initiating ubiquitination of CRL substrates: associates with CRL complexes and specifically mediates addition of the first ubiquitin on CRLs targets. The initial ubiquitin is then elongated. E3 ubiquitin-protein ligase activity is activated upon binding to neddylated cullin-RING ubiquitin ligase complexes. The protein is E3 ubiquitin-protein ligase arih1 (arih1) of Xenopus laevis (African clawed frog).